A 149-amino-acid polypeptide reads, in one-letter code: Large ribosomal subunit protein bL9 (149 aa).

This sequence belongs to the bacterial ribosomal protein bL9 family.

In terms of biological role, binds to the 23S rRNA. In Dichelobacter nodosus (strain VCS1703A), this protein is Large ribosomal subunit protein bL9.